A 103-amino-acid polypeptide reads, in one-letter code: Major carboxysome shell protein CsoS1 (103 aa).

In terms of domain architecture, BMC spans 9–94; sequence ALGMIETRGL…PHREVEPALG (86 aa).

It belongs to the bacterial microcompartments protein family. CsoS1 subfamily. In terms of assembly, homohexamer with a small central pore. A CsoS1-CsoS1D-CsoS2 complex can be isolated following expression in E.coli. Forms a CsoS2-CsoS1-RuBisCO complex.

Its subcellular location is the carboxysome. Its function is as follows. The major shell protein of the carboxysome, a polyhedral inclusion where RuBisCO (ribulose bisphosphate carboxylase, ccbL-ccbS) is sequestered. Assembles into hexamers which make sheets that form the facets of the polyhedral carboxysome. There are estimated to be 538 CsoS1 hexamers per carboxysome; note this number includes the probable carboxysome shell vertex proteins CsoS4A and CsoS4B. The polypeptide is Major carboxysome shell protein CsoS1 (Prochlorococcus marinus subsp. pastoris (strain CCMP1986 / NIES-2087 / MED4)).